A 297-amino-acid polypeptide reads, in one-letter code: Urease accessory protein UreD (297 aa).

Residues 1 to 41 are disordered; it reads MPQAADIATAPQRPSAPGDVVAAGQPPRARGRAHVSSKRRD.

Belongs to the UreD family. As to quaternary structure, ureD, UreF and UreG form a complex that acts as a GTP-hydrolysis-dependent molecular chaperone, activating the urease apoprotein by helping to assemble the nickel containing metallocenter of UreC. The UreE protein probably delivers the nickel.

Its subcellular location is the cytoplasm. Functionally, required for maturation of urease via the functional incorporation of the urease nickel metallocenter. In Ruegeria sp. (strain TM1040) (Silicibacter sp.), this protein is Urease accessory protein UreD.